Reading from the N-terminus, the 125-residue chain is S-adenosylmethionine decarboxylase proenzyme (125 aa).

The active-site Schiff-base intermediate with substrate; via pyruvic acid is Ser-71. A Pyruvic acid (Ser); by autocatalysis modification is found at Ser-71. His-76 functions as the Proton acceptor; for processing activity in the catalytic mechanism. Cys-91 (proton donor; for catalytic activity) is an active-site residue.

It belongs to the prokaryotic AdoMetDC family. Type 1 subfamily. In terms of assembly, heterotetramer of two alpha and two beta chains arranged as a dimer of alpha/beta heterodimers. Pyruvate is required as a cofactor. Is synthesized initially as an inactive proenzyme. Formation of the active enzyme involves a self-maturation process in which the active site pyruvoyl group is generated from an internal serine residue via an autocatalytic post-translational modification. Two non-identical subunits are generated from the proenzyme in this reaction, and the pyruvate is formed at the N-terminus of the alpha chain, which is derived from the carboxyl end of the proenzyme. The post-translation cleavage follows an unusual pathway, termed non-hydrolytic serinolysis, in which the side chain hydroxyl group of the serine supplies its oxygen atom to form the C-terminus of the beta chain, while the remainder of the serine residue undergoes an oxidative deamination to produce ammonia and the pyruvoyl group blocking the N-terminus of the alpha chain.

The enzyme catalyses S-adenosyl-L-methionine + H(+) = S-adenosyl 3-(methylsulfanyl)propylamine + CO2. Its pathway is amine and polyamine biosynthesis; S-adenosylmethioninamine biosynthesis; S-adenosylmethioninamine from S-adenosyl-L-methionine: step 1/1. Functionally, catalyzes the decarboxylation of S-adenosylmethionine to S-adenosylmethioninamine (dcAdoMet), the propylamine donor required for the synthesis of the polyamines spermine and spermidine from the diamine putrescine. The polypeptide is S-adenosylmethionine decarboxylase proenzyme (Pyrobaculum islandicum (strain DSM 4184 / JCM 9189 / GEO3)).